The primary structure comprises 688 residues: Glycine--tRNA ligase beta subunit (688 aa).

The protein belongs to the class-II aminoacyl-tRNA synthetase family. In terms of assembly, tetramer of two alpha and two beta subunits.

The protein localises to the cytoplasm. It catalyses the reaction tRNA(Gly) + glycine + ATP = glycyl-tRNA(Gly) + AMP + diphosphate. This is Glycine--tRNA ligase beta subunit from Aliivibrio salmonicida (strain LFI1238) (Vibrio salmonicida (strain LFI1238)).